The primary structure comprises 2471 residues: Neurogenic locus notch homolog protein 2 (2471 aa).

Positions Met-1–Ala-25 are cleaved as a signal peptide. 4 consecutive EGF-like domains span residues Leu-26 to Gln-63, His-64 to Gln-102, Thr-105 to Gln-143, and Trp-144 to Glu-180. Topologically, residues Leu-26 to Gln-1677 are extracellular. Intrachain disulfides connect Cys-28–Cys-41, Cys-35–Cys-51, Cys-53–Cys-62, Cys-68–Cys-79, Cys-73–Cys-90, Cys-92–Cys-101, Cys-109–Cys-121, Cys-115–Cys-131, Cys-133–Cys-142, Cys-148–Cys-159, Cys-153–Cys-168, Cys-170–Cys-179, Cys-186–Cys-198, Cys-192–Cys-207, Cys-209–Cys-218, Cys-225–Cys-236, Cys-230–Cys-246, Cys-248–Cys-257, Cys-264–Cys-275, Cys-269–Cys-284, Cys-286–Cys-295, Cys-302–Cys-315, Cys-309–Cys-324, Cys-326–Cys-335, Cys-342–Cys-353, Cys-347–Cys-362, Cys-364–Cys-373, Cys-379–Cys-390, Cys-384–Cys-401, Cys-403–Cys-412, Cys-419–Cys-433, Cys-427–Cys-442, Cys-444–Cys-453, Cys-460–Cys-471, Cys-465–Cys-480, Cys-482–Cys-491, Cys-498–Cys-509, Cys-503–Cys-518, Cys-520–Cys-529, Cys-536–Cys-547, Cys-541–Cys-556, Cys-558–Cys-567, Cys-574–Cys-584, Cys-579–Cys-593, Cys-595–Cys-604, Cys-611–Cys-622, Cys-616–Cys-631, Cys-633–Cys-642, Cys-649–Cys-659, Cys-654–Cys-668, Cys-670–Cys-679, Cys-686–Cys-697, Cys-691–Cys-706, Cys-708–Cys-717, Cys-724–Cys-734, Cys-729–Cys-743, Cys-745–Cys-754, Cys-761–Cys-772, Cys-766–Cys-781, Cys-783–Cys-792, Cys-799–Cys-810, Cys-804–Cys-819, Cys-821–Cys-830, Cys-837–Cys-848, Cys-842–Cys-859, Cys-861–Cys-870, Cys-877–Cys-888, Cys-882–Cys-897, Cys-899–Cys-908, Cys-915–Cys-926, Cys-920–Cys-935, Cys-937–Cys-946, Cys-953–Cys-964, Cys-958–Cys-973, Cys-975–Cys-984, Cys-991–Cys-1002, Cys-996–Cys-1011, Cys-1013–Cys-1022, Cys-1029–Cys-1040, Cys-1034–Cys-1049, Cys-1051–Cys-1060, Cys-1067–Cys-1078, Cys-1072–Cys-1087, and Cys-1089–Cys-1098. Residue Asn-46 is glycosylated (N-linked (GlcNAc...) asparagine). N-linked (GlcNAc...) asparagine glycosylation is present at Asn-155. Residues Asp-182–Asp-219 form the EGF-like 5; calcium-binding domain. One can recognise an EGF-like 6 domain in the interval Leu-221–Glu-258. Residues Asn-260–Thr-296 enclose the EGF-like 7; calcium-binding domain. Positions Asp-298–Ser-336 constitute an EGF-like 8; calcium-binding domain. Residues Asn-338 to His-374 form the EGF-like 9; calcium-binding domain. Residues Leu-375 to Thr-413 form the EGF-like 10 domain. One can recognise an EGF-like 11; calcium-binding domain in the interval Asp-415–Glu-454. One can recognise an EGF-like 12; calcium-binding domain in the interval Asp-456 to Glu-492. In terms of domain architecture, EGF-like 13; calcium-binding spans Glu-494–Gln-530. The 37-residue stretch at Asp-532 to Glu-568 folds into the EGF-like 14; calcium-binding domain. Residues Asn-570–Ser-605 form the EGF-like 15; calcium-binding domain. Positions Gln-607–Glu-643 constitute an EGF-like 16; calcium-binding domain. An O-linked (Glc...) serine; alternate glycan is attached at Ser-613. O-linked (Xyl...) serine; alternate glycosylation occurs at Ser-613. Positions Asn-645–Asn-680 constitute an EGF-like 17; calcium-binding domain. Residues Asp-682 to Tyr-718 form the EGF-like 18; calcium-binding domain. The region spanning Gln-720 to Glu-755 is the EGF-like 19 domain. Asn-733 carries an N-linked (GlcNAc...) asparagine glycan. Residues Asp-757–Gln-793 form the EGF-like 20; calcium-binding domain. In terms of domain architecture, EGF-like 21; calcium-binding spans Asn-795 to Gln-831. Positions Val-833 to Thr-871 constitute an EGF-like 22 domain. One can recognise an EGF-like 23; calcium-binding domain in the interval Asp-873–Glu-909. The EGF-like 24; calcium-binding domain occupies Asp-911–Gln-947. The EGF-like 25; calcium-binding domain occupies Asp-949–Glu-985. In terms of domain architecture, EGF-like 26; calcium-binding spans Asn-987 to Leu-1023. An EGF-like 27; calcium-binding domain is found at Glu-1025–Gln-1061. 2 EGF-like domains span residues Leu-1063 to Asp-1099 and Pro-1101 to Glu-1147. N-linked (GlcNAc...) asparagine glycosylation occurs at Asn-1102. Disulfide bonds link Cys-1105–Cys-1126, Cys-1120–Cys-1135, Cys-1137–Cys-1146, Cys-1153–Cys-1164, Cys-1158–Cys-1173, Cys-1175–Cys-1184, Cys-1191–Cys-1202, Cys-1196–Cys-1211, Cys-1213–Cys-1222, Cys-1229–Cys-1241, Cys-1235–Cys-1250, Cys-1252–Cys-1261, Cys-1268–Cys-1281, Cys-1273–Cys-1290, Cys-1292–Cys-1301, Cys-1308–Cys-1319, Cys-1313–Cys-1331, Cys-1333–Cys-1342, Cys-1378–Cys-1389, Cys-1383–Cys-1400, Cys-1402–Cys-1411, Cys-1425–Cys-1448, Cys-1430–Cys-1443, and Cys-1439–Cys-1455. The 37-residue stretch at Gln-1149–Glu-1185 folds into the EGF-like 30; calcium-binding domain. The 37-residue stretch at Glu-1187–Glu-1223 folds into the EGF-like 31; calcium-binding domain. In terms of domain architecture, EGF-like 32; calcium-binding spans Asn-1225–Glu-1262. 3 consecutive EGF-like domains span residues Asp-1264–Glu-1302, Phe-1304–Gln-1343, and Cys-1374–Glu-1412. LNR repeat units follow at residues Cys-1425–Asn-1465, Cys-1466–Thr-1502, and Cys-1503–Glu-1544. The interval Cys-1425–Gln-1677 is negative regulatory region (NRR). Asn-1465 is a glycosylation site (N-linked (GlcNAc...) asparagine). 7 disulfide bridges follow: Cys-1466-Cys-1489, Cys-1472-Cys-1484, Cys-1480-Cys-1496, Cys-1503-Cys-1527, Cys-1509-Cys-1522, Cys-1518-Cys-1534, and Cys-1632-Cys-1639. Residues Leu-1678 to Ile-1698 traverse the membrane as a helical segment. At Met-1699 to Ala-2471 the chain is on the cytoplasmic side. Thr-1716 carries the phosphothreonine modification. A disordered region spans residues Thr-1754–Pro-1788. Residues Glu-1774–Pro-1783 are compositionally biased toward acidic residues. Ser-1778 bears the Phosphoserine mark. Phosphothreonine is present on Thr-1802. Ser-1804 bears the Phosphoserine mark. Thr-1808 carries the post-translational modification Phosphothreonine. ANK repeat units follow at residues Asp-1827–Ala-1871, Thr-1876–Ala-1905, Met-1909–Ala-1939, Asp-1943–Ala-1972, His-1976–Met-2005, and Lys-2009–Ile-2038. Phosphoserine is present on residues Ser-1842 and Ser-1845. Phosphoserine is present on residues Ser-2070, Ser-2078, and Ser-2081. Disordered regions lie at residues Phe-2091–Pro-2168 and Val-2380–Ala-2471. Residue Thr-2097 is modified to Phosphothreonine. Basic residues predominate over residues Pro-2098–Ser-2107. 4 stretches are compositionally biased toward polar residues: residues Ala-2108 to Pro-2117, Glu-2137 to Pro-2150, Thr-2159 to Pro-2168, and Ser-2388 to Gly-2406. Residues Pro-2417–Pro-2445 show a composition bias toward low complexity.

It belongs to the NOTCH family. In terms of assembly, heterodimer of a C-terminal fragment N(TM) and an N-terminal fragment N(EC) which are probably linked by disulfide bonds. Interacts with MAML1, MAML2 and MAML3 which act as transcriptional coactivators for NOTCH2. Interacts with RELA/p65. Interacts with HIF1AN. Interacts (via ANK repeats) with TCIM, the interaction inhibits the nuclear translocation of NOTCH2 N2ICD. Interacts with CUL1, RBX1, SKP1 and FBXW7 that are SCF(FBXW7) E3 ubiquitin-protein ligase complex components. Interacts with MINAR1; this interaction increases MINAR1 stability and function. Interacts with NOTCH2NL (NOTCH2NLA, NOTCH2NLB and/or NOTCH2NLC); leading to enhance Notch signaling pathway in a non-cell-autonomous manner. Interacts with MDK; this interaction mediates a nuclear accumulation of NOTCH2 and therefore activation of NOTCH2 signaling leading to interaction between HES1 and STAT3. Interacts with MINAR2. Post-translationally, synthesized in the endoplasmic reticulum as an inactive form which is proteolytically cleaved by a furin-like convertase in the trans-Golgi network before it reaches the plasma membrane to yield an active, ligand-accessible form. Cleavage results in a C-terminal fragment N(TM) and a N-terminal fragment N(EC). Following ligand binding, it is cleaved by TNF-alpha converting enzyme (TACE) to yield a membrane-associated intermediate fragment called notch extracellular truncation (NEXT). This fragment is then cleaved by presenilin dependent gamma-secretase to release a notch-derived peptide containing the intracellular domain (NICD) from the membrane. In terms of processing, hydroxylated by HIF1AN. Can be either O-glucosylated or O-xylosylated at Ser-613 by POGLUT1. Post-translationally, phosphorylated by GSK3. GSK3-mediated phosphorylation is necessary for NOTCH2 recognition by FBXW7, ubiquitination and degradation via the ubiquitin proteasome pathway. Expressed in the brain, heart, kidney, lung, skeletal muscle and liver. Ubiquitously expressed in the embryo.

It localises to the cell membrane. It is found in the nucleus. Its subcellular location is the cytoplasm. Functionally, functions as a receptor for membrane-bound ligands Jagged-1 (JAG1), Jagged-2 (JAG2) and Delta-1 (DLL1) to regulate cell-fate determination. Upon ligand activation through the released notch intracellular domain (NICD) it forms a transcriptional activator complex with RBPJ/RBPSUH and activates genes of the enhancer of split locus. Affects the implementation of differentiation, proliferation and apoptotic programs. Involved in bone remodeling and homeostasis. In collaboration with RELA/p65 enhances NFATc1 promoter activity and positively regulates RANKL-induced osteoclast differentiation. Positively regulates self-renewal of liver cancer cells. This Homo sapiens (Human) protein is Neurogenic locus notch homolog protein 2.